Reading from the N-terminus, the 34-residue chain is Photosystem II reaction center protein M (34 aa).

A helical membrane pass occupies residues 5-25 (ILAFIAIVLFISVPTAFLLII).

The protein belongs to the PsbM family. In terms of assembly, PSII is composed of 1 copy each of membrane proteins PsbA, PsbB, PsbC, PsbD, PsbE, PsbF, PsbH, PsbI, PsbJ, PsbK, PsbL, PsbM, PsbT, PsbX, PsbY, PsbZ, Psb30/Ycf12, at least 3 peripheral proteins of the oxygen-evolving complex and a large number of cofactors. It forms dimeric complexes.

Its subcellular location is the plastid. It is found in the chloroplast thylakoid membrane. Functionally, one of the components of the core complex of photosystem II (PSII). PSII is a light-driven water:plastoquinone oxidoreductase that uses light energy to abstract electrons from H(2)O, generating O(2) and a proton gradient subsequently used for ATP formation. It consists of a core antenna complex that captures photons, and an electron transfer chain that converts photonic excitation into a charge separation. This subunit is found at the monomer-monomer interface. This Cycas taitungensis (Prince sago) protein is Photosystem II reaction center protein M.